Here is a 40-residue protein sequence, read N- to C-terminus: Toxin CSTX-17 (40 aa).

4 cysteine pairs are disulfide-bonded: Cys2–Cys17, Cys9–Cys22, Cys16–Cys33, and Cys24–Cys31. Trp40 is subject to Tryptophan amide.

Post-translationally, contains 4 disulfide bonds. As to expression, expressed by the venom gland.

It localises to the secreted. In Cupiennius salei (American wandering spider), this protein is Toxin CSTX-17.